The primary structure comprises 78 residues: Probable [Fe-S]-dependent transcriptional repressor (78 aa).

4 residues coordinate iron-sulfur cluster: Cys56, Cys61, Cys64, and Cys70.

It belongs to the FeoC family.

May function as a transcriptional regulator that controls feoABC expression. This chain is Probable [Fe-S]-dependent transcriptional repressor, found in Salmonella heidelberg (strain SL476).